The chain runs to 248 residues: 5'-nucleotidase SurE (248 aa).

A divalent metal cation-binding residues include Asp8, Asp9, Ser39, and Asn91.

This sequence belongs to the SurE nucleotidase family. It depends on a divalent metal cation as a cofactor.

The protein resides in the cytoplasm. The catalysed reaction is a ribonucleoside 5'-phosphate + H2O = a ribonucleoside + phosphate. Its function is as follows. Nucleotidase that shows phosphatase activity on nucleoside 5'-monophosphates. The polypeptide is 5'-nucleotidase SurE (Neisseria meningitidis serogroup B (strain ATCC BAA-335 / MC58)).